Here is a 260-residue protein sequence, read N- to C-terminus: Triosephosphate isomerase (260 aa).

11-13 (NWK) contacts substrate. His103 (electrophile) is an active-site residue. The active-site Proton acceptor is Glu175. Substrate contacts are provided by residues Gly181, Ser220, and 241–242 (GG).

It belongs to the triosephosphate isomerase family. In terms of assembly, homodimer.

It localises to the cytoplasm. It carries out the reaction D-glyceraldehyde 3-phosphate = dihydroxyacetone phosphate. The protein operates within carbohydrate biosynthesis; gluconeogenesis. Its pathway is carbohydrate degradation; glycolysis; D-glyceraldehyde 3-phosphate from glycerone phosphate: step 1/1. Its function is as follows. Involved in the gluconeogenesis. Catalyzes stereospecifically the conversion of dihydroxyacetone phosphate (DHAP) to D-glyceraldehyde-3-phosphate (G3P). This chain is Triosephosphate isomerase, found in Shewanella woodyi (strain ATCC 51908 / MS32).